The primary structure comprises 987 residues: MAGIRLHVIAPLALAAVSKCARDPAVYVRRCAANALPKLHDLRLEEHASAIEELVGILLNDHSPGVVGAAAAAFTSICPNNFKLIGKNYKKLCQILPDVEEWGQILLIGTLLRYVVARHGLVRESLMLSIHGTNSNGFCEKDGLGRDLTLDKEDGGKSDSFDVNLVSLVSKCYIQGPDEYLSRSSCTDTVSSAFDTKETTSIAHNEDVKILLQCTSPLLWSNNSAVVLAAAGVQWIMAPLEDVKKIVKPLLFLLRSSSASKYVVLCNILVFAKAVPSLFAPHFENFFICSSDAYQVKAYKLEMLSLIATTSSIASILREFEDYIKDPDRRFAADTVAAIGLCAKRLMTIPTTCLDGLLALVRQESFAGDFESADGEAGVLVQAVMSIQTMIERDPLRHEKVLIQLFRSLDSIKVAAARATIIWMVGVYCSLGHIIPRMLTTITKYLAWSFKSEASETKLQILNTIAKVLISAEAGDFHMLKRIVVYVFELGEYDLSYDIRDRTRFLKKLLSCKLASHEPAEDSVASQENIAAHVVEHVFGRKLKSVSPITLHNRFYLPGSLSQIVLHAAPGYEPLPKPCSFVYEEQDQLSDLDKQREAAADLDGSEESSETGDENGSSDYDSESSNGSDFSSEGDERTVSNDANDPAAPLIQISETSVSADQEELRSRRALDLWLDDQPSTSNQTPSALNSNQSSYAKISIGDVGSRVKPKSYSLVDPGNGSGLKVDYAFLSEVSNVSPLHVCVEVLFENSSAEPILEVNLEDEESMKVADSSEQTLVGKANASYNNIPTLIPMEEISCLEPHQSTKRLIQVRFHHHLLPMRLTLHYNEKKVPVKLRPDLGYLVKPFSMSIEEFLATESRLPGMFEYSRRCTFDDHVKDSRTENGKDKFLSICESITLKVLSNSNLHLVSVDLPVANSLEDATGLRLRFSSKILSSEIPLLITITVEGKCTEVLNLTVKINCEETVFGLNLLNRIANFMVEPSSSAT.

The disordered stretch occupies residues 586–662; the sequence is QDQLSDLDKQ…ISETSVSADQ (77 aa). The span at 603–613 shows a compositional bias: acidic residues; sequence DGSEESSETGD. Residues 614-631 are compositionally biased toward low complexity; sequence ENGSSDYDSESSNGSDFS.

Belongs to the adaptor complexes large subunit family. As to quaternary structure, adaptor protein complex 3 (AP-3) is a heterotetramer composed of two large adaptins (delta-type subunit and beta-type subunit), a medium adaptin (mu-type subunit) and a small adaptin (sigma-type subunit).

It localises to the cytoplasm. The protein resides in the golgi apparatus. Its subcellular location is the cytoplasmic vesicle membrane. Functionally, part of the AP-3 complex, an adaptor-related complex which seems to be clathrin-associated. The complex is associated with the Golgi region as well as more peripheral structures. It facilitates the budding of vesicles from the Golgi membrane and may be directly involved in trafficking to the vacuole. It also function in maintaining the identity of lytic vacuoles and in regulating the transition between storage and lytic vacuoles. This chain is AP3-complex subunit beta-A (AP3BA), found in Arabidopsis thaliana (Mouse-ear cress).